The sequence spans 458 residues: Bifunctional protein GlmU (458 aa).

Residues 1-230 form a pyrophosphorylase region; it reads MLQIDVVILA…DWEVVGVNDK (230 aa). Residues 9-12, K23, Q75, and 80-81 contribute to the UDP-N-acetyl-alpha-D-glucosamine site; these read LAAG and GT. Mg(2+) is bound at residue D104. UDP-N-acetyl-alpha-D-glucosamine contacts are provided by G139, E155, N170, and N228. Position 228 (N228) interacts with Mg(2+). Residues 231–251 form a linker region; it reads IQLSTLERAHQQDVAKGLMEQ. An N-acetyltransferase region spans residues 252-458; sequence GVMFADPARF…NWKRPKKNKD (207 aa). R334 and K352 together coordinate UDP-N-acetyl-alpha-D-glucosamine. The active-site Proton acceptor is the H364. Y367 and N378 together coordinate UDP-N-acetyl-alpha-D-glucosamine. Residues A381, 387 to 388, S406, A424, and R441 each bind acetyl-CoA; that span reads NY.

This sequence in the N-terminal section; belongs to the N-acetylglucosamine-1-phosphate uridyltransferase family. In the C-terminal section; belongs to the transferase hexapeptide repeat family. In terms of assembly, homotrimer. Mg(2+) serves as cofactor.

The protein resides in the cytoplasm. It carries out the reaction alpha-D-glucosamine 1-phosphate + acetyl-CoA = N-acetyl-alpha-D-glucosamine 1-phosphate + CoA + H(+). The enzyme catalyses N-acetyl-alpha-D-glucosamine 1-phosphate + UTP + H(+) = UDP-N-acetyl-alpha-D-glucosamine + diphosphate. It functions in the pathway nucleotide-sugar biosynthesis; UDP-N-acetyl-alpha-D-glucosamine biosynthesis; N-acetyl-alpha-D-glucosamine 1-phosphate from alpha-D-glucosamine 6-phosphate (route II): step 2/2. Its pathway is nucleotide-sugar biosynthesis; UDP-N-acetyl-alpha-D-glucosamine biosynthesis; UDP-N-acetyl-alpha-D-glucosamine from N-acetyl-alpha-D-glucosamine 1-phosphate: step 1/1. The protein operates within bacterial outer membrane biogenesis; LPS lipid A biosynthesis. In terms of biological role, catalyzes the last two sequential reactions in the de novo biosynthetic pathway for UDP-N-acetylglucosamine (UDP-GlcNAc). The C-terminal domain catalyzes the transfer of acetyl group from acetyl coenzyme A to glucosamine-1-phosphate (GlcN-1-P) to produce N-acetylglucosamine-1-phosphate (GlcNAc-1-P), which is converted into UDP-GlcNAc by the transfer of uridine 5-monophosphate (from uridine 5-triphosphate), a reaction catalyzed by the N-terminal domain. The protein is Bifunctional protein GlmU of Nitrosomonas eutropha (strain DSM 101675 / C91 / Nm57).